Here is a 337-residue protein sequence, read N- to C-terminus: 4-hydroxythreonine-4-phosphate dehydrogenase (337 aa).

His-139 and Thr-140 together coordinate substrate. Residues His-173, His-218, and His-273 each coordinate a divalent metal cation. Lys-281, Asn-290, and Arg-299 together coordinate substrate.

This sequence belongs to the PdxA family. In terms of assembly, homodimer. Zn(2+) serves as cofactor. It depends on Mg(2+) as a cofactor. Co(2+) is required as a cofactor.

The protein resides in the cytoplasm. The enzyme catalyses 4-(phosphooxy)-L-threonine + NAD(+) = 3-amino-2-oxopropyl phosphate + CO2 + NADH. The protein operates within cofactor biosynthesis; pyridoxine 5'-phosphate biosynthesis; pyridoxine 5'-phosphate from D-erythrose 4-phosphate: step 4/5. In terms of biological role, catalyzes the NAD(P)-dependent oxidation of 4-(phosphooxy)-L-threonine (HTP) into 2-amino-3-oxo-4-(phosphooxy)butyric acid which spontaneously decarboxylates to form 3-amino-2-oxopropyl phosphate (AHAP). This is 4-hydroxythreonine-4-phosphate dehydrogenase from Rhodopseudomonas palustris (strain ATCC BAA-98 / CGA009).